Reading from the N-terminus, the 367-residue chain is 5-amino-6-(D-ribitylamino)uracil--L-tyrosine 4-hydroxyphenyl transferase (367 aa).

A Radical SAM core domain is found at 54 to 288 (ITYIENWNIN…VYAISRLMFR (235 aa)). Residues Cys68, Cys72, and Cys75 each coordinate [4Fe-4S] cluster.

Belongs to the radical SAM superfamily. CofH family. Consists of two subunits, CofG and CofH. The cofactor is [4Fe-4S] cluster.

The enzyme catalyses 5-amino-6-(D-ribitylamino)uracil + L-tyrosine + S-adenosyl-L-methionine = 5-amino-5-(4-hydroxybenzyl)-6-(D-ribitylimino)-5,6-dihydrouracil + 2-iminoacetate + 5'-deoxyadenosine + L-methionine + H(+). It functions in the pathway cofactor biosynthesis; coenzyme F0 biosynthesis. Functionally, catalyzes the radical-mediated synthesis of 5-amino-5-(4-hydroxybenzyl)-6-(D-ribitylimino)-5,6-dihydrouracil from 5-amino-6-(D-ribitylamino)uracil and L-tyrosine. The polypeptide is 5-amino-6-(D-ribitylamino)uracil--L-tyrosine 4-hydroxyphenyl transferase (Methanothermobacter thermautotrophicus (strain ATCC 29096 / DSM 1053 / JCM 10044 / NBRC 100330 / Delta H) (Methanobacterium thermoautotrophicum)).